The sequence spans 317 residues: Periplasmic [NiFe] hydrogenase small subunit 1 (317 aa).

Residues 1-49 constitute a signal peptide (tat-type signal); that stretch reads MRFSVGLGKEGAEERLARRGVSRRDFLKFCTAIAVTMGMGPAFAPEVAR. Residues cysteine 67, cysteine 70, cysteine 164, cysteine 200, histidine 238, cysteine 241, cysteine 266, and cysteine 272 each coordinate [4Fe-4S] cluster. 3 residues coordinate [3Fe-4S] cluster: cysteine 281, cysteine 299, and cysteine 302.

Belongs to the [NiFe]/[NiFeSe] hydrogenase small subunit family. Heterodimer of a large and a small subunit. It depends on [3Fe-4S] cluster as a cofactor. [4Fe-4S] cluster is required as a cofactor. In terms of processing, predicted to be exported by the Tat system. The position of the signal peptide cleavage has not been experimentally proven.

The protein localises to the periplasm. The catalysed reaction is 2 Fe(III)-[cytochrome c3] + H2 = 2 Fe(II)-[cytochrome c3] + 2 H(+). The protein is Periplasmic [NiFe] hydrogenase small subunit 1 (hynB1) of Nitratidesulfovibrio vulgaris (strain ATCC 29579 / DSM 644 / CCUG 34227 / NCIMB 8303 / VKM B-1760 / Hildenborough) (Desulfovibrio vulgaris).